The sequence spans 394 residues: NAD(P)H-quinone oxidoreductase subunit H (394 aa).

Belongs to the complex I 49 kDa subunit family. NDH-1 can be composed of about 15 different subunits; different subcomplexes with different compositions have been identified which probably have different functions.

The protein localises to the cellular thylakoid membrane. The enzyme catalyses a plastoquinone + NADH + (n+1) H(+)(in) = a plastoquinol + NAD(+) + n H(+)(out). It carries out the reaction a plastoquinone + NADPH + (n+1) H(+)(in) = a plastoquinol + NADP(+) + n H(+)(out). In terms of biological role, NDH-1 shuttles electrons from an unknown electron donor, via FMN and iron-sulfur (Fe-S) centers, to quinones in the respiratory and/or the photosynthetic chain. The immediate electron acceptor for the enzyme in this species is believed to be plastoquinone. Couples the redox reaction to proton translocation, and thus conserves the redox energy in a proton gradient. Cyanobacterial NDH-1 also plays a role in inorganic carbon-concentration. This chain is NAD(P)H-quinone oxidoreductase subunit H, found in Microcystis aeruginosa (strain NIES-843 / IAM M-2473).